Here is a 206-residue protein sequence, read N- to C-terminus: MANVAVYNMEGKEVDKIELNDSIFGVEINEHLVHMAVLQQLANKRQGTQKAKTRSEVRGGGRKPWRQKGTGHARQGSTRSPQWTGGGVVFAPTPRDYSFKLNKKEKRAALKSALTSRVVENKFVVVDELKLDEIKTKKFVEVLKNLNVEKALVVLNDMDEKVIASAANIPTVKTTQTNELNVFDVLKYDTVVVTKAAVATIEEVYA.

The interval 44 to 87 is disordered; sequence KRQGTQKAKTRSEVRGGGRKPWRQKGTGHARQGSTRSPQWTGGG. Residues 60–71 show a composition bias toward basic residues; sequence GGRKPWRQKGTG.

It belongs to the universal ribosomal protein uL4 family. In terms of assembly, part of the 50S ribosomal subunit.

Its function is as follows. One of the primary rRNA binding proteins, this protein initially binds near the 5'-end of the 23S rRNA. It is important during the early stages of 50S assembly. It makes multiple contacts with different domains of the 23S rRNA in the assembled 50S subunit and ribosome. In terms of biological role, forms part of the polypeptide exit tunnel. The polypeptide is Large ribosomal subunit protein uL4 (Agathobacter rectalis (strain ATCC 33656 / DSM 3377 / JCM 17463 / KCTC 5835 / VPI 0990) (Eubacterium rectale)).